The sequence spans 288 residues: ATP phosphoribosyltransferase (288 aa).

It belongs to the ATP phosphoribosyltransferase family. Long subfamily. The cofactor is Mg(2+).

It is found in the cytoplasm. The catalysed reaction is 1-(5-phospho-beta-D-ribosyl)-ATP + diphosphate = 5-phospho-alpha-D-ribose 1-diphosphate + ATP. It participates in amino-acid biosynthesis; L-histidine biosynthesis; L-histidine from 5-phospho-alpha-D-ribose 1-diphosphate: step 1/9. Feedback inhibited by histidine. Functionally, catalyzes the condensation of ATP and 5-phosphoribose 1-diphosphate to form N'-(5'-phosphoribosyl)-ATP (PR-ATP). Has a crucial role in the pathway because the rate of histidine biosynthesis seems to be controlled primarily by regulation of HisG enzymatic activity. This is ATP phosphoribosyltransferase from Methanococcus maripaludis (strain DSM 14266 / JCM 13030 / NBRC 101832 / S2 / LL).